A 596-amino-acid polypeptide reads, in one-letter code: Alpha-1,3-galactosidase A (596 aa).

An N-terminal signal peptide occupies residues 1 to 21 (MQNPVASLLFILAMLTGPCPA). The interval 23 to 57 (DYPERTERTQSAGNHVWHIDPDKGNDGNPGTAPST) is disordered. PbH1 repeat units lie at residues 351–373 (RGKI…NVHG), 482–504 (RKPV…LVED), 515–537 (VRNM…QIVP), and 547–569 (HRNI…RIRH).

This sequence belongs to the glycosyl hydrolase 110 family. A subfamily.

It catalyses the reaction Hydrolysis of terminal, non-reducing branched (1-&gt;3)-alpha-D-galactosidic residues, producing free D-galactose.. The enzyme catalyses Hydrolysis of terminal, non-reducing alpha-D-galactose residues in alpha-D-galactosides, including galactose oligosaccharides, galactomannans and galactolipids.. Alpha-galactosidase that specifically removes branched alpha-1,3-linked galactose residues present in blood group B antigens. Has no activity toward linear alpha-1,3-linked galactose residues. This Akkermansia muciniphila (strain ATCC BAA-835 / DSM 22959 / JCM 33894 / BCRC 81048 / CCUG 64013 / CIP 107961 / Muc) protein is Alpha-1,3-galactosidase A (glaA).